We begin with the raw amino-acid sequence, 460 residues long: uncharacterized protein (460 aa).

Positions 1-33 (MKESNSRREFLSQSGKMVTAAALFGTSVPLAHA) form a signal peptide, tat-type signal.

This sequence belongs to the metallo-dependent hydrolases superfamily. In terms of processing, exported by the Tat system. The position of the signal peptide cleavage has not been experimentally proven. Can also be exported by the Sec system.

This is an uncharacterized protein from Escherichia coli (strain K12).